The primary structure comprises 418 residues: Phospho-N-acetylmuramoyl-pentapeptide-transferase (418 aa).

A run of 10 helical transmembrane segments spans residues 22–42, 72–92, 95–115, 135–155, 208–228, 244–264, 277–297, 302–322, 326–346, and 395–415; these read YISF…VLIG, TPTM…LLLA, SNIY…LGLI, IIAQ…SPNI, AATW…VSNG, AIIG…GFAA, LTVF…HNAF, FMGD…AIII, LLLP…MIQV, and KIVV…VVTL.

Belongs to the glycosyltransferase 4 family. MraY subfamily. It depends on Mg(2+) as a cofactor.

It is found in the cell inner membrane. The enzyme catalyses UDP-N-acetyl-alpha-D-muramoyl-L-alanyl-gamma-D-glutamyl-meso-2,6-diaminopimeloyl-D-alanyl-D-alanine + di-trans,octa-cis-undecaprenyl phosphate = di-trans,octa-cis-undecaprenyl diphospho-N-acetyl-alpha-D-muramoyl-L-alanyl-D-glutamyl-meso-2,6-diaminopimeloyl-D-alanyl-D-alanine + UMP. Its pathway is cell wall biogenesis; peptidoglycan biosynthesis. Functionally, catalyzes the initial step of the lipid cycle reactions in the biosynthesis of the cell wall peptidoglycan: transfers peptidoglycan precursor phospho-MurNAc-pentapeptide from UDP-MurNAc-pentapeptide onto the lipid carrier undecaprenyl phosphate, yielding undecaprenyl-pyrophosphoryl-MurNAc-pentapeptide, known as lipid I. This chain is Phospho-N-acetylmuramoyl-pentapeptide-transferase, found in Azobacteroides pseudotrichonymphae genomovar. CFP2.